A 101-amino-acid polypeptide reads, in one-letter code: Urease subunit beta (101 aa).

It belongs to the urease beta subunit family. As to quaternary structure, heterotrimer of UreA (gamma), UreB (beta) and UreC (alpha) subunits. Three heterotrimers associate to form the active enzyme.

It localises to the cytoplasm. The catalysed reaction is urea + 2 H2O + H(+) = hydrogencarbonate + 2 NH4(+). It participates in nitrogen metabolism; urea degradation; CO(2) and NH(3) from urea (urease route): step 1/1. This is Urease subunit beta from Burkholderia cenocepacia (strain ATCC BAA-245 / DSM 16553 / LMG 16656 / NCTC 13227 / J2315 / CF5610) (Burkholderia cepacia (strain J2315)).